A 94-amino-acid polypeptide reads, in one-letter code: Integration host factor subunit beta (94 aa).

Belongs to the bacterial histone-like protein family. As to quaternary structure, heterodimer of an alpha and a beta chain.

Functionally, this protein is one of the two subunits of integration host factor, a specific DNA-binding protein that functions in genetic recombination as well as in transcriptional and translational control. The polypeptide is Integration host factor subunit beta (Vibrio campbellii (strain ATCC BAA-1116)).